Here is a 1140-residue protein sequence, read N- to C-terminus: DNA damage-binding protein 1 (1140 aa).

An N-acetylserine modification is found at S2. The interaction with CDT1 stretch occupies residues 2–768 (SYNYVVTAQK…QALSSSVSSS (767 aa)). The WD repeat beta-propeller A stretch occupies residues 13 to 356 (TAVNGCVTGH…VVAMETFTNL (344 aa)). The tract at residues 391–708 (RNGIGIHEHA…LTIGTIDEIQ (318 aa)) is WD repeat beta-propeller B; Interaction with CUL4A. A WD repeat beta-propeller C region spans residues 709 to 1043 (KLHIRTVPLY…NGMIGLVTSL (335 aa)). Residues 771-1140 (FSSSTAPHET…KVVEELTRIH (370 aa)) are interaction with CDT1 and CUL4A. At K1067 the chain carries N6-acetyllysine. K1121 participates in a covalent cross-link: Glycyl lysine isopeptide (Lys-Gly) (interchain with G-Cter in SUMO2). A Phosphothreonine modification is found at T1125.

Belongs to the DDB1 family. Component of the UV-DDB complex which includes DDB1 and DDB2; the heterodimer dimerizes to give rise to a heterotetramer when bound to damaged DNA. The UV-DDB complex interacts with monoubiquitinated histone H2A and binds to XPC via the DDB2 subunit. Component of numerous DCX (DDB1-CUL4-X-box) E3 ubiquitin-protein ligase complexes which consist of a core of DDB1, CUL4A or CUL4B and RBX1. DDB1 may recruit specific substrate targeting subunits to the DCX complex. These substrate targeting subunits are generally known as DCAF (DDB1- and CUL4-associated factor) or CDW (CUL4-DDB1-associated WD40-repeat) proteins. Interacts with AMBRA1, ATG16L1, BTRC, CRBN, DCAF1, DCAF4, DCAF5, DCAF6, DCAF7, DCAF8, DCAF9, DCAF10, DCAF11, DCAF12, DCAF15, DCAF16, DCAF17, DDA1, DET1, DTL, ERCC8, FBXW5, FBXW8, GRWD1, KATNB1, NLE1, NUP43, PAFAH1B1, PHIP, PWP1, RBBP4, RBBP5, RBBP7, COP1, SNRNP40, DCAF1, WDR5, WDR5B, WDR12, WDR26, WDR39, WDR42, WDR53, WDR59, WDR61, WSB1, WSB2, LRWD1 and WDTC1. DCX complexes may associate with the COP9 signalosome, and this inhibits the E3 ubiquitin-protein ligase activity of the complex. Interacts with NF2, TSC1 and TSC2. Interacts with AGO1 and AGO2. Associates with the E3 ligase complex containing DYRK2, EDD/UBR5, DDB1 and DCAF1 proteins (EDVP complex). Interacts directly with DYRK2. DCX(DTL) complex interacts with FBXO11; does not ubiquitinate and degradate FBXO11. Interacts with TRPC4AP. Interacts with CRY1 and CRY2. The DDB1-CUL4A complex interacts with CRY1. May also interact with DCUN1D1, DCUN1D2, DCUN1D3 and DCUN1D5. Component of the DCX(DCAF13) E3 ubiquitin ligase complex, at least composed of CUL4 (CUL4A or CUL4B), DDB1, DCAF13 and RBX1. Interacts with DCAF13 (via WD40 domain). Post-translationally, phosphorylated by ABL1. Ubiquitinated by CUL4A. Subsequently degraded by ubiquitin-dependent proteolysis. In terms of processing, acetylated, promoting interaction with CUL4 (CUL4A or CUL4B) and subsequent formation of DCX (DDB1-CUL4-X-box) E3 ubiquitin-protein ligase complexes. Deacetylation by SIRT7 impairs the interaction with CUL4 (CUL4A or CUL4B) and formation of DCX (DDB1-CUL4-X-box) E3 ubiquitin-protein ligase complexes.

It is found in the cytoplasm. Its subcellular location is the nucleus. It participates in protein modification; protein ubiquitination. Its function is as follows. Protein, which is both involved in DNA repair and protein ubiquitination, as part of the UV-DDB complex and DCX (DDB1-CUL4-X-box) complexes, respectively. Core component of the UV-DDB complex (UV-damaged DNA-binding protein complex), a complex that recognizes UV-induced DNA damage and recruit proteins of the nucleotide excision repair pathway (the NER pathway) to initiate DNA repair. The UV-DDB complex preferentially binds to cyclobutane pyrimidine dimers (CPD), 6-4 photoproducts (6-4 PP), apurinic sites and short mismatches. Also functions as a component of numerous distinct DCX (DDB1-CUL4-X-box) E3 ubiquitin-protein ligase complexes which mediate the ubiquitination and subsequent proteasomal degradation of target proteins. The functional specificity of the DCX E3 ubiquitin-protein ligase complex is determined by the variable substrate recognition component recruited by DDB1. DCX(DDB2) (also known as DDB1-CUL4-ROC1, CUL4-DDB-ROC1 and CUL4-DDB-RBX1) may ubiquitinate histone H2A, histone H3 and histone H4 at sites of UV-induced DNA damage. The ubiquitination of histones may facilitate their removal from the nucleosome and promote subsequent DNA repair. DCX(DDB2) also ubiquitinates XPC, which may enhance DNA-binding by XPC and promote NER. DCX(DTL) plays a role in PCNA-dependent polyubiquitination of CDT1 and MDM2-dependent ubiquitination of TP53 in response to radiation-induced DNA damage and during DNA replication. DCX(ERCC8) (the CSA complex) plays a role in transcription-coupled repair (TCR). The DDB1-CUL4A-DTL E3 ligase complex regulates the circadian clock function by mediating the ubiquitination and degradation of CRY1. DDB1-mediated CRY1 degradation promotes FOXO1 protein stability and FOXO1-mediated gluconeogenesis in the liver. By acting on TET dioxygenses, essential for oocyte maintenance at the primordial follicle stage, hence essential for female fertility. Maternal factor required for proper zygotic genome activation and genome reprogramming. In Bos taurus (Bovine), this protein is DNA damage-binding protein 1 (DDB1).